The sequence spans 85 residues: Putative membrane protein insertion efficiency factor (85 aa).

It belongs to the UPF0161 family.

The protein localises to the cell inner membrane. In terms of biological role, could be involved in insertion of integral membrane proteins into the membrane. The polypeptide is Putative membrane protein insertion efficiency factor (Serratia proteamaculans (strain 568)).